The following is a 434-amino-acid chain: F-box/LRR-repeat protein 21 (434 aa).

Residues 39 to 85 (LLDWGTLPHHVILQIFQYLPLIDRARASSVCRRWNEVFHIPDLWRKF) enclose the F-box domain. LRR repeat units lie at residues 187-213 (DTPV…KMSS), 214-239 (CPHV…ALNY), 242-265 (LSDE…RIDV), 322-347 (GRSV…VVCA), 349-374 (GLLP…GLSE), and 375-400 (CEVS…SIME).

As to quaternary structure, part of the SCF (SKP1-CUL1-F-box) E3 ubiquitin-protein ligase complex SCF(FBXL21) composed of CUL1, SKP1, RBX1 and FBXL21. Interacts with CRY1 and CRY2. Expressed in the hypothalamus, especially in the suprachiasmatic nucleus (SCN). Expression is driven by the core-clock. There is a pronounced diurnal and circadian expression rhythms rising rapidly at the start of the day and declining at the onset of the night.

Its subcellular location is the cytoplasm. The protein resides in the cytosol. It localises to the nucleus. It functions in the pathway protein modification; protein ubiquitination. Substrate-recognition component of the SCF(FBXL21) E3 ubiquitin ligase complex involved in circadian rhythm function. Plays a key role in the maintenance of both the speed and the robustness of the circadian clock oscillation. The SCF(FBXL21) complex mainly acts in the cytosol and mediates ubiquitination of CRY proteins (CRY1 and CRY2), leading to CRY proteins stabilization. The SCF(FBXL21) complex counteracts the activity of the SCF(FBXL3) complex and protects CRY proteins from degradation. Involved in the hypothalamic suprachiasmatic nucleus (SCN) clock regulating temporal organization of the daily activities. The protein is F-box/LRR-repeat protein 21 (Fbxl21) of Mus musculus (Mouse).